Consider the following 1778-residue polypeptide: Nuclear receptor corepressor 1 (1778 aa).

One can recognise an SANT domain in the interval 125-176 (DRLEEWSPEERSLFKSRQADHVKIFHGLTEFFVDKTASDLVLFYYMNKKTED). In terms of domain architecture, Myb-like spans 356 to 398 (WTDDEKTKLVTLINSSPTLDWVSISEGMNRRPNECKMQYDAMN). Positions 409-421 (VDEEDGNGQEEGG) are enriched in acidic residues. 6 disordered regions span residues 409–671 (VDEE…TVST), 992–1024 (SLTP…AGRS), 1195–1218 (KLQQ…ATPQ), 1276–1339 (QHLQ…SRSV), 1414–1434 (PPKT…RTLS), and 1646–1718 (AAPT…PPLP). Composition is skewed to low complexity over residues 431–442 (SSAAARRSGLAR) and 450–469 (TPRA…VTRA). A compositionally biased stretch (acidic residues) spans 478–493 (DLGEEIDEMEIEDNDE). Residues 494-513 (DASRGSRGKDSKAPSDRDGS) show a composition bias toward basic and acidic residues. Acidic residues-rich tracts occupy residues 517 to 545 (MEGD…EEEE) and 599 to 616 (ESDD…DVDE). Low complexity-rich tracts occupy residues 626–639 (SSSS…SVGG) and 649–671 (LVQQ…TVST). A compositionally biased stretch (low complexity) spans 1276 to 1285 (QHLQQQQQHH). Over residues 1687 to 1696 (SSVNSNVSDV) the composition is skewed to low complexity.

It belongs to the N-CoR nuclear receptor corepressors family. Interacts with gex-3. Interacts (via C-terminus) with nhr-60. As to expression, in larvae, expressed in pharyngeal neurons, ventral and dorsal nerve cords, tail neurons, egg-laying neurons and egg-laying muscles. Detected in the neurons of the pharyngeal nerve ring, head neurons, tail neurons and egg-laying muscles in adults. Detected in male-specific tail ganglia and rays in males.

It is found in the nucleus. In terms of biological role, mediates transcriptional repression by certain nuclear receptors. Plays a role in development and neuronal function. May play a role in muscle-specific oxidative mitochondrial metabolism. This chain is Nuclear receptor corepressor 1, found in Caenorhabditis elegans.